Reading from the N-terminus, the 156-residue chain is Small ribosomal subunit protein uS7 (156 aa).

The protein belongs to the universal ribosomal protein uS7 family. Part of the 30S ribosomal subunit. Contacts proteins S9 and S11.

In terms of biological role, one of the primary rRNA binding proteins, it binds directly to 16S rRNA where it nucleates assembly of the head domain of the 30S subunit. Is located at the subunit interface close to the decoding center, probably blocks exit of the E-site tRNA. The sequence is that of Small ribosomal subunit protein uS7 from Haemophilus influenzae (strain 86-028NP).